The primary structure comprises 362 residues: 3-dehydroquinate synthase (362 aa).

Residues 72-77 (DGEQYK), 106-110 (GVVGD), 130-131 (TT), K143, K152, and 170-173 (CLKT) each bind NAD(+). 3 residues coordinate Zn(2+): E185, H248, and H265.

Belongs to the sugar phosphate cyclases superfamily. Dehydroquinate synthase family. Requires Co(2+) as cofactor. The cofactor is Zn(2+). NAD(+) is required as a cofactor.

It is found in the cytoplasm. The enzyme catalyses 7-phospho-2-dehydro-3-deoxy-D-arabino-heptonate = 3-dehydroquinate + phosphate. It functions in the pathway metabolic intermediate biosynthesis; chorismate biosynthesis; chorismate from D-erythrose 4-phosphate and phosphoenolpyruvate: step 2/7. Functionally, catalyzes the conversion of 3-deoxy-D-arabino-heptulosonate 7-phosphate (DAHP) to dehydroquinate (DHQ). The protein is 3-dehydroquinate synthase of Aliivibrio salmonicida (strain LFI1238) (Vibrio salmonicida (strain LFI1238)).